We begin with the raw amino-acid sequence, 55 residues long: DNA-binding protein (55 aa).

The disordered stretch occupies residues 1–55 (MVYRRRRRSSTGTTYGSTRRRRSSGYRRRPGRPRTYRRSRSRSSTGRRSYRTRYY). 2 tandem repeats follow at residues 5–10 (RRRRSS) and 19–24 (RRRRSS). The tract at residues 5 to 24 (RRRRSSTGTTYGSTRRRRSS) is 2 X 6 AA repeats of R-R-R-R-S-S. A compositionally biased stretch (basic residues) spans 18–41 (TRRRRSSGYRRRPGRPRTYRRSRS).

As to quaternary structure, interacts with protein AC132. Phosphorylated.

The protein resides in the virion. It is found in the host cytoplasm. Plays a role in viral DNA packaging and nucleocapsid assembly. Promotes viral gene transcription during the late stage of infection while it is non-essential for the basal level of viral gene transcription. The chain is DNA-binding protein (P6.9) from Lepidoptera (butterflies and moths).